Here is a 228-residue protein sequence, read N- to C-terminus: Ribose-5-phosphate isomerase A (228 aa).

Substrate is bound by residues 32-35 (TGST), 85-88 (DGAD), and 98-101 (KGGG). E107 serves as the catalytic Proton acceptor. A substrate-binding site is contributed by K125.

Belongs to the ribose 5-phosphate isomerase family. As to quaternary structure, homodimer.

The enzyme catalyses aldehydo-D-ribose 5-phosphate = D-ribulose 5-phosphate. It participates in carbohydrate degradation; pentose phosphate pathway; D-ribose 5-phosphate from D-ribulose 5-phosphate (non-oxidative stage): step 1/1. Functionally, catalyzes the reversible conversion of ribose-5-phosphate to ribulose 5-phosphate. The polypeptide is Ribose-5-phosphate isomerase A (Cupriavidus pinatubonensis (strain JMP 134 / LMG 1197) (Cupriavidus necator (strain JMP 134))).